The chain runs to 483 residues: Altronate oxidoreductase (483 aa).

Position 18-29 (18-29) interacts with NAD(+); it reads IIQFGEGNFLRA.

This sequence belongs to the mannitol dehydrogenase family. UxaB subfamily.

It catalyses the reaction D-altronate + NAD(+) = keto-D-tagaturonate + NADH + H(+). It participates in carbohydrate metabolism; pentose and glucuronate interconversion. This chain is Altronate oxidoreductase, found in Escherichia coli O6:K15:H31 (strain 536 / UPEC).